The sequence spans 290 residues: Porphobilinogen deaminase (290 aa).

Position 237 is an S-(dipyrrolylmethanemethyl)cysteine (Cys-237).

The protein belongs to the HMBS family. In terms of assembly, monomer. It depends on dipyrromethane as a cofactor.

The enzyme catalyses 4 porphobilinogen + H2O = hydroxymethylbilane + 4 NH4(+). It functions in the pathway porphyrin-containing compound metabolism; protoporphyrin-IX biosynthesis; coproporphyrinogen-III from 5-aminolevulinate: step 2/4. Tetrapolymerization of the monopyrrole PBG into the hydroxymethylbilane pre-uroporphyrinogen in several discrete steps. This chain is Porphobilinogen deaminase, found in Clostridium botulinum (strain 657 / Type Ba4).